Here is a 263-residue protein sequence, read N- to C-terminus: ATP synthase subunit b 2 (263 aa).

The helical transmembrane segment at 2 to 22 threads the bilayer; sequence LIDPLTVVAQIINFLILVALL.

The protein belongs to the ATPase B chain family. As to quaternary structure, F-type ATPases have 2 components, F(1) - the catalytic core - and F(0) - the membrane proton channel. F(1) has five subunits: alpha(3), beta(3), gamma(1), delta(1), epsilon(1). F(0) has four main subunits: a(1), b(1), b'(1) and c(10-14). The alpha and beta chains form an alternating ring which encloses part of the gamma chain. F(1) is attached to F(0) by a central stalk formed by the gamma and epsilon chains, while a peripheral stalk is formed by the delta, b and b' chains.

The protein localises to the cellular thylakoid membrane. In terms of biological role, f(1)F(0) ATP synthase produces ATP from ADP in the presence of a proton or sodium gradient. F-type ATPases consist of two structural domains, F(1) containing the extramembraneous catalytic core and F(0) containing the membrane proton channel, linked together by a central stalk and a peripheral stalk. During catalysis, ATP synthesis in the catalytic domain of F(1) is coupled via a rotary mechanism of the central stalk subunits to proton translocation. Component of the F(0) channel, it forms part of the peripheral stalk, linking F(1) to F(0). This chain is ATP synthase subunit b 2, found in Acaryochloris marina (strain MBIC 11017).